A 313-amino-acid polypeptide reads, in one-letter code: Undecaprenyl-diphosphatase (313 aa).

The next 6 membrane-spanning stretches (helical) occupy residues 121-141 (YRIGWYVIIATIPIGVLGFLF), 152-172 (LWLVSFMLIAFALVIAAAEHY), 187-207 (GLVMGFAQCLALIPGVSRSGA), 225-245 (FSFLLAIPAVTASGLFSLPDA), 259-279 (QLLVATIVSFVVGYASVAWLL), and 290-310 (FVGYRIVLGLVIMGLLGAGVI).

It belongs to the UppP family.

Its subcellular location is the cell membrane. It catalyses the reaction di-trans,octa-cis-undecaprenyl diphosphate + H2O = di-trans,octa-cis-undecaprenyl phosphate + phosphate + H(+). Functionally, catalyzes the dephosphorylation of undecaprenyl diphosphate (UPP). Confers resistance to bacitracin. The sequence is that of Undecaprenyl-diphosphatase from Nocardia farcinica (strain IFM 10152).